Here is a 193-residue protein sequence, read N- to C-terminus: Selenoprotein S A (193 aa).

Residues 29-49 (WALASYGWYILFGCIILYFLI) traverse the membrane as a helical segment. Residues 114–125 (IETWDRMQEGKS) are compositionally biased toward basic and acidic residues. Residues 114-193 (IETWDRMQEG…RRGPSSGGUG (80 aa)) are disordered. Low complexity predominate over residues 137-153 (SPSTSASSSPSTSSSAP). Residue Sec192 is a non-standard amino acid, selenocysteine.

The protein belongs to the selenoprotein S family.

The protein resides in the endoplasmic reticulum membrane. Its subcellular location is the cytoplasm. Involved in the degradation process of misfolded endoplasmic reticulum (ER) luminal proteins. Participates in the transfer of misfolded proteins from the ER to the cytosol, where they are destroyed by the proteasome in a ubiquitin-dependent manner. The sequence is that of Selenoprotein S A (vimp-a) from Xenopus laevis (African clawed frog).